We begin with the raw amino-acid sequence, 805 residues long: Transcription factor E2f1 (805 aa).

Disordered regions lie at residues 9-45 (APIN…TTGH), 119-208 (AAAA…LRHD), and 224-255 (PASH…RNRA). Low complexity-rich tracts occupy residues 12–37 (NNSN…QQHY) and 119–134 (AAAA…QLQQ). 2 stretches are compositionally biased toward polar residues: residues 144–154 (RKATGKSNDIT) and 181–195 (HHQT…SSAP). Positions 147-161 (TGKSNDITNYYKVKR) match the PIP-box K+4 motif motif. The segment covering 240–249 (AASVASSSSS) has biased composition (low complexity). A DNA-binding region spans residues 253–318 (NRADTSLGIL…KKSKNNIQWR (66 aa)). The dimerization stretch occupies residues 318–411 (RCGQSMVSQE…LPNTKLPREI (94 aa)). Residue Ser434 is modified to Phosphoserine. Disordered stretches follow at residues 578 to 650 (SLTE…QRRS) and 714 to 743 (GAGA…DANS). 2 stretches are compositionally biased toward low complexity: residues 595–615 (AAAA…NSHN) and 623–636 (SNHS…NSKS). Residues 637–647 (QPPTIGYGSSQ) show a composition bias toward polar residues.

The protein belongs to the E2F/DP family. Heterodimer of E2f and Dp. Cooperates to give sequence-specific DNA binding and optimal trans-activation. Interacts with PCNA. Ubiquitinated by the DCX(DTL) complex, also named CRL4(CDT2) complex, leading to its degradation during S phase. Ubiquitination by the DCX(DTL) complex is essential for cell cycle control and is PCNA-dependent: interacts with PCNA via its PIP-box, while the presence of the containing the 'K+4' motif in the PIP box, recruit the DCX(DTL) complex, leading to its degradation. Segmentally repeated expression throughout early embryos is restricted to the ventral nerve cord in later embryos.

The protein localises to the nucleus. Transcriptional activator that binds to E2f sites. Required for wild-type growth in mitotic and polytene tissues, Contributes to the expression of replication genes at the G1-S transition and Cyclin E. Activates cell proliferation in wing imaginal disk, which requires expression of vg. This is Transcription factor E2f1 from Drosophila melanogaster (Fruit fly).